We begin with the raw amino-acid sequence, 193 residues long: uncharacterized protein (193 aa).

This is an uncharacterized protein from Mycoplasma genitalium (strain ATCC 33530 / DSM 19775 / NCTC 10195 / G37) (Mycoplasmoides genitalium).